Here is a 276-residue protein sequence, read N- to C-terminus: NAD kinase (276 aa).

Asp-61 serves as the catalytic Proton acceptor. NAD(+) is bound by residues 61 to 62 (DG), Arg-66, 135 to 136 (NE), Arg-146, His-163, Asp-165, and Ala-200.

This sequence belongs to the NAD kinase family. A divalent metal cation serves as cofactor.

The protein localises to the cytoplasm. The enzyme catalyses NAD(+) + ATP = ADP + NADP(+) + H(+). Involved in the regulation of the intracellular balance of NAD and NADP, and is a key enzyme in the biosynthesis of NADP. Catalyzes specifically the phosphorylation on 2'-hydroxyl of the adenosine moiety of NAD to yield NADP. The polypeptide is NAD kinase (Chloroflexus aurantiacus (strain ATCC 29366 / DSM 635 / J-10-fl)).